The primary structure comprises 302 residues: MSAIENIVISMENATERRKHITKQFESKKLSFSFFNAYTYQSINQSINQSINQSINQSINQSINQSINQSNSILHNIEESRILTKGEKGCLISHFLLWNKCVNENFEYLKIFEDDVILGENAEVFLNQNEWLKTRFDFNDIFIIRLETFLQPVKLEKQTKIPPFNSRNFDILKSTHWGTAGYIISQGAAKYVIEYLKNIPSDEIVAVDELIFNKLVDVDNYIVYQLNPAICIQELQANQSKSVLTSGLEKERQKRSKIRKKKTLKQRLTRIKENIIRALNRKKWKEQQRIKEMQGKEIVRFM.

7 tandem repeats follow at residues S42–Q45, S46–Q49, S50–Q53, S54–Q57, S58–Q61, S62–Q65, and S66–Q69. Positions S42–Q69 are 7 X 4 AA tandem repeats of S-I-N-Q.

Belongs to the glycosyltransferase 25 family.

Functionally, involved in extracellular lipooligosaccharide (LOS) biosynthesis and virulence expression. Involved in the synthesis of the oligosaccharide moiety of the LOS molecule by adding GalNAc. The sequence is that of Lipooligosaccharide biosynthesis protein lex-1 (lex1) from Haemophilus influenzae (strain ATCC 51907 / DSM 11121 / KW20 / Rd).